We begin with the raw amino-acid sequence, 353 residues long: Photosystem II protein D1 (353 aa).

Thr2 bears the N-acetylthreonine mark. Residue Thr2 is modified to Phosphothreonine. Helical transmembrane passes span 29–46 (YIGW…TATS), 118–133 (HFLL…EWEL), and 142–156 (WIAV…AATA). A chlorophyll a-binding site is contributed by His118. Tyr126 provides a ligand contact to pheophytin a. Asp170 and Glu189 together coordinate [CaMn4O5] cluster. A helical transmembrane segment spans residues 197-218 (FHMLGVAGVFGGSLFSAMHGSL). His198 is a chlorophyll a binding site. A quinone is bound by residues His215 and 264–265 (SF). His215 is a binding site for Fe cation. His272 serves as a coordination point for Fe cation. A helical transmembrane segment spans residues 274–288 (FLAAWPVVGIWFTAL). [CaMn4O5] cluster contacts are provided by His332, Glu333, Asp342, and Ala344. Positions 345 to 353 (AIEAPATNG) are excised as a propeptide.

The protein belongs to the reaction center PufL/M/PsbA/D family. As to quaternary structure, PSII is composed of 1 copy each of membrane proteins PsbA, PsbB, PsbC, PsbD, PsbE, PsbF, PsbH, PsbI, PsbJ, PsbK, PsbL, PsbM, PsbT, PsbX, PsbY, PsbZ, Psb30/Ycf12, at least 3 peripheral proteins of the oxygen-evolving complex and a large number of cofactors. It forms dimeric complexes. It depends on The D1/D2 heterodimer binds P680, chlorophylls that are the primary electron donor of PSII, and subsequent electron acceptors. It shares a non-heme iron and each subunit binds pheophytin, quinone, additional chlorophylls, carotenoids and lipids. D1 provides most of the ligands for the Mn4-Ca-O5 cluster of the oxygen-evolving complex (OEC). There is also a Cl(-1) ion associated with D1 and D2, which is required for oxygen evolution. The PSII complex binds additional chlorophylls, carotenoids and specific lipids. as a cofactor. In terms of processing, tyr-161 forms a radical intermediate that is referred to as redox-active TyrZ, YZ or Y-Z. C-terminally processed by CTPA; processing is essential to allow assembly of the oxygen-evolving complex and thus photosynthetic growth.

It localises to the plastid membrane. The catalysed reaction is 2 a plastoquinone + 4 hnu + 2 H2O = 2 a plastoquinol + O2. Functionally, photosystem II (PSII) is a light-driven water:plastoquinone oxidoreductase that uses light energy to abstract electrons from H(2)O, generating O(2) and a proton gradient subsequently used for ATP formation. It consists of a core antenna complex that captures photons, and an electron transfer chain that converts photonic excitation into a charge separation. The D1/D2 (PsbA/PsbD) reaction center heterodimer binds P680, the primary electron donor of PSII as well as several subsequent electron acceptors. In Cuscuta reflexa (Southern Asian dodder), this protein is Photosystem II protein D1.